We begin with the raw amino-acid sequence, 366 residues long: Cytochrome c peroxidase, mitochondrial (366 aa).

The transit peptide at Met1–Tyr46 directs the protein to the mitochondrion. The active-site Proton acceptor is His127. His250 is a heme b binding site. Trp266 (tryptophan radical intermediate) is an active-site residue.

This sequence belongs to the peroxidase family. Cytochrome c peroxidase subfamily. In terms of assembly, forms a one-to-one complex with cytochrome c. Heme b serves as cofactor.

Its subcellular location is the mitochondrion matrix. It localises to the mitochondrion intermembrane space. The catalysed reaction is 2 Fe(II)-[cytochrome c] + H2O2 + 2 H(+) = 2 Fe(III)-[cytochrome c] + 2 H2O. Functionally, destroys radicals which are normally produced within the cells and which are toxic to biological systems. The sequence is that of Cytochrome c peroxidase, mitochondrial (ccp1) from Aspergillus fumigatus (strain ATCC MYA-4609 / CBS 101355 / FGSC A1100 / Af293) (Neosartorya fumigata).